We begin with the raw amino-acid sequence, 237 residues long: tRNA (guanine-N(7)-)-methyltransferase (237 aa).

S-adenosyl-L-methionine is bound by residues Glu68, Glu93, Asp120, and Asp143. Asp143 is an active-site residue. Substrate contacts are provided by residues Lys147, Asp179, and 216 to 219 (TKFE).

It belongs to the class I-like SAM-binding methyltransferase superfamily. TrmB family.

It catalyses the reaction guanosine(46) in tRNA + S-adenosyl-L-methionine = N(7)-methylguanosine(46) in tRNA + S-adenosyl-L-homocysteine. It participates in tRNA modification; N(7)-methylguanine-tRNA biosynthesis. Catalyzes the formation of N(7)-methylguanine at position 46 (m7G46) in tRNA. The chain is tRNA (guanine-N(7)-)-methyltransferase from Shewanella pealeana (strain ATCC 700345 / ANG-SQ1).